The following is a 347-amino-acid chain: Nicotinate-nucleotide--dimethylbenzimidazole phosphoribosyltransferase (347 aa).

The Proton acceptor role is filled by E316.

It belongs to the CobT family.

It carries out the reaction 5,6-dimethylbenzimidazole + nicotinate beta-D-ribonucleotide = alpha-ribazole 5'-phosphate + nicotinate + H(+). Its pathway is nucleoside biosynthesis; alpha-ribazole biosynthesis; alpha-ribazole from 5,6-dimethylbenzimidazole: step 1/2. Catalyzes the synthesis of alpha-ribazole-5'-phosphate from nicotinate mononucleotide (NAMN) and 5,6-dimethylbenzimidazole (DMB). The protein is Nicotinate-nucleotide--dimethylbenzimidazole phosphoribosyltransferase of Vibrio campbellii (strain ATCC BAA-1116).